A 1013-amino-acid polypeptide reads, in one-letter code: EF-hand calcium-binding domain-containing protein 6 (1013 aa).

EF-hand domains follow at residues lysine 20–lysine 55, lysine 145–glutamine 180, aspartate 251–lysine 286, leucine 287–methionine 322, and arginine 352–phenylalanine 387. The disordered stretch occupies residues glutamine 441–lysine 460. EF-hand domains are found at residues glutamine 482–proline 517, glutamate 589–asparagine 624, asparagine 695–proline 730, leucine 731–proline 766, aspartate 812–serine 847, and serine 917–lysine 952. The Ca(2+) site is built by aspartate 602, aspartate 604, aspartate 606, and aspartate 613. The residue at position 732 (threonine 732) is a Phosphothreonine.

As to quaternary structure, microtubule inner protein component of sperm flagellar doublet microtubules. Binds PARK7. Part of a ternary complex containing PARK7, EFCAB6/DJBP and AR.

Its subcellular location is the nucleus. It localises to the cytoplasm. The protein localises to the cytoskeleton. It is found in the flagellum axoneme. Its function is as follows. Negatively regulates the androgen receptor by recruiting histone deacetylase complex, and protein DJ-1 antagonizes this inhibition by abrogation of this complex. Microtubule inner protein (MIP) part of the dynein-decorated doublet microtubules (DMTs) in cilia axoneme, which is required for motile cilia beating. This chain is EF-hand calcium-binding domain-containing protein 6 (EFCAB6), found in Pongo abelii (Sumatran orangutan).